The chain runs to 129 residues: Large ribosomal subunit protein bL12c (129 aa).

It belongs to the bacterial ribosomal protein bL12 family. In terms of assembly, homodimer. Part of the ribosomal stalk of the 50S ribosomal subunit. Forms a multimeric L10(L12)X complex, where L10 forms an elongated spine to which 2 to 4 L12 dimers bind in a sequential fashion. Binds GTP-bound translation factors.

It localises to the plastid. The protein resides in the chloroplast. Forms part of the ribosomal stalk which helps the ribosome interact with GTP-bound translation factors. Is thus essential for accurate translation. This Pyropia yezoensis (Susabi-nori) protein is Large ribosomal subunit protein bL12c.